A 649-amino-acid chain; its full sequence is Centrosomal protein of 63 kDa-A (649 aa).

2 coiled-coil regions span residues 19–185 and 222–556; these read DSCE…YQHQ and EEEL…DAAS. Phosphoserine; by atm and atr is present on S560. A coiled-coil region spans residues 612-645; it reads FLQEEEQRSHELLQRLNAHIEELKQESQRTVEHF.

The protein belongs to the CEP63 family. Post-translationally, phosphorylation at Ser-560 by atm and atr promotes its delocalization from the centrosome and impairs its ability to promote centrosome dependent spindle assembly.

The protein resides in the cytoplasm. Its subcellular location is the cytoskeleton. The protein localises to the microtubule organizing center. It is found in the centrosome. It localises to the centriole. Required for normal spindle assembly. Plays a key role in mother-centriole-dependent centriole duplication. Plays a role in DNA damage response. Following DNA damage, such as double-strand breaks (DSBs), is removed from centrosomes; this leads to the inactivation of spindle assembly and delay in mitotic progression. This is Centrosomal protein of 63 kDa-A (cep63-a) from Xenopus laevis (African clawed frog).